The primary structure comprises 399 residues: 3-dehydroquinate synthase (399 aa).

Belongs to the archaeal-type DHQ synthase family.

The catalysed reaction is 2-amino-2,3,7-trideoxy-D-lyxo-hept-6-ulosonate + NAD(+) + H2O = 3-dehydroquinate + NH4(+) + NADH + H(+). Catalyzes the oxidative deamination and cyclization of 2-amino-3,7-dideoxy-D-threo-hept-6-ulosonic acid (ADH) to yield 3-dehydroquinate (DHQ), which is fed into the canonical shikimic pathway of aromatic amino acid biosynthesis. In Haloquadratum walsbyi (strain DSM 16790 / HBSQ001), this protein is 3-dehydroquinate synthase.